The primary structure comprises 373 residues: tRNA-specific 2-thiouridylase MnmA (373 aa).

ATP is bound by residues 12-19 (GMSGGVDS) and methionine 38. Positions 98–100 (NPD) are interaction with target base in tRNA. Cysteine 103 (nucleophile) is an active-site residue. Cysteines 103 and 200 form a disulfide. Residue glycine 127 coordinates ATP. The interaction with tRNA stretch occupies residues 150 to 152 (KDQ). Cysteine 200 acts as the Cysteine persulfide intermediate in catalysis. An interaction with tRNA region spans residues 312–313 (RY).

This sequence belongs to the MnmA/TRMU family.

Its subcellular location is the cytoplasm. It carries out the reaction S-sulfanyl-L-cysteinyl-[protein] + uridine(34) in tRNA + AH2 + ATP = 2-thiouridine(34) in tRNA + L-cysteinyl-[protein] + A + AMP + diphosphate + H(+). Its function is as follows. Catalyzes the 2-thiolation of uridine at the wobble position (U34) of tRNA, leading to the formation of s(2)U34. This Streptococcus pyogenes serotype M3 (strain SSI-1) protein is tRNA-specific 2-thiouridylase MnmA.